Here is a 375-residue protein sequence, read N- to C-terminus: ELAV-like protein 2 (375 aa).

RRM domains lie at 67 to 145 (TNLI…YARP), 153 to 233 (ANLY…FANN), and 292 to 370 (WCIF…FKTS).

The protein belongs to the RRM elav family. As to quaternary structure, part of a ribonucleoprotein (RNP) complex, at least composed of elavl1/elrA and/or elavl2/elrB, igf2bp3/vg1RBP, ddx6/Xp54, ybx2/frgy2, lsm14b/rap55b and, in a subset of RNP complexes, stau1/staufen. Binds RNA as a homooligomer.

It is found in the cytoplasm. Its subcellular location is the cell cortex. Binds to poly-U elements and AU-rich elements (AREs) in the 3'-UTR of target mRNAs. Required for the vegetal localization of vg1 mRNA. Probably required for nervous system development. This Xenopus tropicalis (Western clawed frog) protein is ELAV-like protein 2.